Here is an 867-residue protein sequence, read N- to C-terminus: Nuclear cap-binding protein subunit 1 (867 aa).

Residues 9–228 (LLRIGDRCPE…DLWERIQVLS (220 aa)) form the MIF4G domain. Positions 752 to 797 (SADGDVPNLRAGDPNVNSSARDPEATTMEIDNENGGDNDSQLNGQN) are disordered. Residues 788–797 (DNDSQLNGQN) are compositionally biased toward polar residues.

The protein belongs to the NCBP1 family. Component of the nuclear cap-binding complex (CBC), a heterodimer composed of ABH1/CBP80 and CBP20 that interacts with m7GpppG-capped RNA.

It is found in the nucleus. The protein resides in the cytoplasm. Functionally, component of the cap-binding complex (CBC), which binds cotranscriptionally to the 5'-cap of pre-mRNAs and is involved in various processes such as pre-mRNA splicing and RNA-mediated gene silencing (RNAi) by microRNAs (miRNAs). The CBC complex is involved in miRNA-mediated RNA interference and is required for primary miRNA processing. In the CBC complex, ABH1/CBP80 does not bind directly capped RNAs (m7GpppG-capped RNA) but is required to stabilize the movement of the N-terminal loop of CBP20 and lock the CBC into a high affinity cap-binding state with the cap structure. This Oryza sativa subsp. japonica (Rice) protein is Nuclear cap-binding protein subunit 1 (ABH1).